The sequence spans 346 residues: Uroporphyrinogen decarboxylase (346 aa).

Residues 21 to 25, aspartate 71, tyrosine 146, serine 201, and histidine 316 contribute to the substrate site; that span reads RQAGR.

The protein belongs to the uroporphyrinogen decarboxylase family. As to quaternary structure, homodimer.

It is found in the cytoplasm. The enzyme catalyses uroporphyrinogen III + 4 H(+) = coproporphyrinogen III + 4 CO2. The protein operates within porphyrin-containing compound metabolism; protoporphyrin-IX biosynthesis; coproporphyrinogen-III from 5-aminolevulinate: step 4/4. Functionally, catalyzes the decarboxylation of four acetate groups of uroporphyrinogen-III to yield coproporphyrinogen-III. The sequence is that of Uroporphyrinogen decarboxylase from Rickettsia rickettsii (strain Iowa).